The following is a 186-amino-acid chain: ADP-ribosylation factor-like protein 8 (186 aa).

The segment at residues 1–19 (MLALINRILEWFKSIFWKE) is an intramembrane region (note=Mediates targeting to membranes). GTP is bound by residues 29–35 (QFSGKTT), 71–75 (DIGGQ), and 130–133 (NKRD).

Belongs to the small GTPase superfamily. Arf family. In terms of assembly, interacts with tubulin. Interacts (in GTP-bound form) with Rilpl. Interacts with unc-104. As to expression, expressed throughout development, from embryo to adult stage, in different tissues such as larval motor neurons, salivary glands, testis and ovaries (at protein level).

It localises to the lysosome membrane. The protein resides in the synapse. It is found in the cell projection. The protein localises to the axon. Its subcellular location is the perikaryon. Functionally, required for normal functioning of the late endocytic pathway including lysosome motility and late endosome-lysosome fusion. Not required for the delivery of lysosomal membrane protein-containing vesicles to late endosomes. In larval motor neurons, mediates the anterograde axonal long-range transport of presynaptic lysosome-related vesicles required for presynaptic biogenesis and synaptic function. Acts downstream of Rab2 during presynaptic precursor vesicle biogenesis. Essential role in chromosome segregation. The protein is ADP-ribosylation factor-like protein 8 of Drosophila melanogaster (Fruit fly).